The following is a 299-amino-acid chain: 4-hydroxybenzoate octaprenyltransferase (299 aa).

Transmembrane regions (helical) follow at residues 31–51 (IGIY…ADGL), 54–74 (WDVL…GCVI), 105–125 (VLFF…TNPL), 148–168 (QLPQ…AFAA), 177–197 (IWVL…FYAM), 241–261 (FGLG…FAYQ), and 277–297 (FLHN…DKLI).

It belongs to the UbiA prenyltransferase family. It depends on Mg(2+) as a cofactor.

Its subcellular location is the cell inner membrane. The enzyme catalyses all-trans-octaprenyl diphosphate + 4-hydroxybenzoate = 4-hydroxy-3-(all-trans-octaprenyl)benzoate + diphosphate. Its pathway is cofactor biosynthesis; ubiquinone biosynthesis. Functionally, catalyzes the prenylation of para-hydroxybenzoate (PHB) with an all-trans polyprenyl group. Mediates the second step in the final reaction sequence of ubiquinone-8 (UQ-8) biosynthesis, which is the condensation of the polyisoprenoid side chain with PHB, generating the first membrane-bound Q intermediate 3-octaprenyl-4-hydroxybenzoate. This chain is 4-hydroxybenzoate octaprenyltransferase, found in Saccharophagus degradans (strain 2-40 / ATCC 43961 / DSM 17024).